The primary structure comprises 1215 residues: DNA-directed RNA polymerase subunit beta' (1215 aa).

The Zn(2+) site is built by C60, C62, C75, and C78. The Mg(2+) site is built by D450, D452, and D454. Residues C818, C892, C899, and C902 each contribute to the Zn(2+) site.

Belongs to the RNA polymerase beta' chain family. As to quaternary structure, the RNAP catalytic core consists of 2 alpha, 1 beta, 1 beta' and 1 omega subunit. When a sigma factor is associated with the core the holoenzyme is formed, which can initiate transcription. Mg(2+) is required as a cofactor. Zn(2+) serves as cofactor.

The enzyme catalyses RNA(n) + a ribonucleoside 5'-triphosphate = RNA(n+1) + diphosphate. Its function is as follows. DNA-dependent RNA polymerase catalyzes the transcription of DNA into RNA using the four ribonucleoside triphosphates as substrates. The polypeptide is DNA-directed RNA polymerase subunit beta' (Streptococcus suis (strain 98HAH33)).